The primary structure comprises 64 residues: Small ribosomal subunit protein bS21 (64 aa).

This sequence belongs to the bacterial ribosomal protein bS21 family.

The protein is Small ribosomal subunit protein bS21 of Oenococcus oeni (strain ATCC BAA-331 / PSU-1).